A 200-amino-acid polypeptide reads, in one-letter code: dITP/XTP pyrophosphatase (200 aa).

8-13 (TRNAGK) contributes to the substrate binding site. Asp72 acts as the Proton acceptor in catalysis. Residue Asp72 coordinates Mg(2+). Residues Ser73, 155-158 (FGYD), Lys178, and 183-184 (HR) each bind substrate.

The protein belongs to the HAM1 NTPase family. In terms of assembly, homodimer. Requires Mg(2+) as cofactor.

The catalysed reaction is XTP + H2O = XMP + diphosphate + H(+). It carries out the reaction dITP + H2O = dIMP + diphosphate + H(+). The enzyme catalyses ITP + H2O = IMP + diphosphate + H(+). Functionally, pyrophosphatase that catalyzes the hydrolysis of nucleoside triphosphates to their monophosphate derivatives, with a high preference for the non-canonical purine nucleotides XTP (xanthosine triphosphate), dITP (deoxyinosine triphosphate) and ITP. Seems to function as a house-cleaning enzyme that removes non-canonical purine nucleotides from the nucleotide pool, thus preventing their incorporation into DNA/RNA and avoiding chromosomal lesions. The protein is dITP/XTP pyrophosphatase of Streptomyces avermitilis (strain ATCC 31267 / DSM 46492 / JCM 5070 / NBRC 14893 / NCIMB 12804 / NRRL 8165 / MA-4680).